A 917-amino-acid polypeptide reads, in one-letter code: Isoleucine--tRNA ligase (917 aa).

Positions 56, 67, 554, 555, 557, 558, and 585 each coordinate L-isoleucyl-5'-AMP. Residues 57 to 67 carry the 'HIGH' region motif; that stretch reads PYANGNLHMGH. The 'KMSKS' region signature appears at 595–599; the sequence is KMSKS. Position 598 (K598) interacts with ATP. 2 residues coordinate tRNA(Ile): R632 and Q640. C886, C889, C906, and C909 together coordinate Zn(2+).

It belongs to the class-I aminoacyl-tRNA synthetase family. IleS type 1 subfamily. Monomer. Requires Zn(2+) as cofactor.

The protein localises to the cytoplasm. The enzyme catalyses tRNA(Ile) + L-isoleucine + ATP = L-isoleucyl-tRNA(Ile) + AMP + diphosphate. In terms of biological role, catalyzes the attachment of isoleucine to tRNA(Ile). As IleRS can inadvertently accommodate and process structurally similar amino acids such as valine, to avoid such errors it has two additional distinct tRNA(Ile)-dependent editing activities. One activity is designated as 'pretransfer' editing and involves the hydrolysis of activated Val-AMP. The other activity is designated 'posttransfer' editing and involves deacylation of mischarged Val-tRNA(Ile). This is Isoleucine--tRNA ligase (ileS) from Staphylococcus aureus.